Reading from the N-terminus, the 346-residue chain is uncharacterized protein (346 aa).

Positions 321-346 are disordered; that stretch reads TPWGTHSVAGVGPPPYARSGPASATT.

This is an uncharacterized protein from Mycobacterium tuberculosis (strain CDC 1551 / Oshkosh).